Here is a 216-residue protein sequence, read N- to C-terminus: Thymidine kinase (216 aa).

Residues Gly-9–Ser-16 and Asp-86–Gln-89 contribute to the ATP site. Catalysis depends on Glu-87, which acts as the Proton acceptor.

It belongs to the thymidine kinase family. As to quaternary structure, homotetramer.

The protein resides in the cytoplasm. It catalyses the reaction thymidine + ATP = dTMP + ADP + H(+). This Streptomyces coelicolor (strain ATCC BAA-471 / A3(2) / M145) protein is Thymidine kinase.